We begin with the raw amino-acid sequence, 956 residues long: Endogenous retrovirus group K member 8 Pol protein (956 aa).

Positions leucine 57–isoleucine 245 constitute a Reverse transcriptase domain. The LPQG signature appears at leucine 161–glycine 164. Residues tyrosine 195–aspartate 198 carry the YXDD motif. The 131-residue stretch at leucine 460 to isoleucine 590 folds into the RNase H type-1 domain. Residues aspartate 469, glutamate 497, aspartate 517, and aspartate 582 each coordinate Mg(2+). An Integrase-type zinc finger spans residues serine 587 to glutamine 628. Histidine 596, histidine 600, cysteine 624, and cysteine 627 together coordinate Zn(2+). Residues arginine 642 to lysine 803 form the Integrase catalytic domain. A DNA-binding region (integrase-type) is located at residues lysine 811 to glutamate 859. The interval alanine 864 to valine 890 is disordered. The span at serine 869 to aspartate 881 shows a compositional bias: polar residues.

The protein belongs to the beta type-B retroviral polymerase family. HERV class-II K(HML-2) pol subfamily.

It catalyses the reaction DNA(n) + a 2'-deoxyribonucleoside 5'-triphosphate = DNA(n+1) + diphosphate. The catalysed reaction is Endonucleolytic cleavage to 5'-phosphomonoester.. Functionally, early post-infection, the reverse transcriptase converts the viral RNA genome into double-stranded viral DNA. The RNase H domain of the reverse transcriptase performs two functions. It degrades the RNA template and specifically removes the RNA primer from the RNA/DNA hybrid. Following nuclear import, the integrase catalyzes the insertion of the linear, double-stranded viral DNA into the host cell chromosome. Endogenous Pol proteins may have kept, lost or modified their original function during evolution. The protein is Endogenous retrovirus group K member 8 Pol protein (ERVK-8) of Homo sapiens (Human).